The chain runs to 64 residues: Large ribosomal subunit protein bL35 (64 aa).

The segment at Met1–Lys20 is disordered.

It belongs to the bacterial ribosomal protein bL35 family.

This chain is Large ribosomal subunit protein bL35, found in Corynebacterium urealyticum (strain ATCC 43042 / DSM 7109).